The following is a 525-amino-acid chain: uncharacterized protein (525 aa).

The N-terminal stretch at 1 to 21 is a signal peptide; that stretch reads MLECLSALLVLFAGGGGSVLA. The Extracellular segment spans residues 22 to 448; the sequence is AVQSKTVADP…ISAASQLDER (427 aa). Residues 242-264 are disordered; sequence KVSSENCSKDTDDKSGSKKERNT. The chain crosses the membrane as a helical span at residues 449-469; the sequence is IFIFTAITVSITTLMMLGFSY. The Cytoplasmic portion of the chain corresponds to 470 to 525; sequence RSRVSFRDHSIDDSDDDNDWSDDEVEFDEEYFYSLPVSIPEKGISLDKMAQQLGVE.

It is found in the membrane. This is an uncharacterized protein from Saccharomyces cerevisiae (strain RM11-1a) (Baker's yeast).